The following is a 188-amino-acid chain: Elongation factor P-like protein (188 aa).

The protein belongs to the elongation factor P family.

The sequence is that of Elongation factor P-like protein from Xylella fastidiosa (strain 9a5c).